We begin with the raw amino-acid sequence, 479 residues long: Glutamate--tRNA ligase (479 aa).

Residues 21–31 carry the 'HIGH' region motif; sequence PSPTGYLHVGG. Residues 248-252 carry the 'KMSKS' region motif; the sequence is KLSKR. K251 is an ATP binding site.

The protein belongs to the class-I aminoacyl-tRNA synthetase family. Glutamate--tRNA ligase type 1 subfamily. Monomer.

It is found in the cytoplasm. It carries out the reaction tRNA(Glu) + L-glutamate + ATP = L-glutamyl-tRNA(Glu) + AMP + diphosphate. Its function is as follows. Catalyzes the attachment of glutamate to tRNA(Glu) in a two-step reaction: glutamate is first activated by ATP to form Glu-AMP and then transferred to the acceptor end of tRNA(Glu). This chain is Glutamate--tRNA ligase, found in Actinobacillus pleuropneumoniae serotype 5b (strain L20).